Here is a 137-residue protein sequence, read N- to C-terminus: BolA-like protein 1 (137 aa).

Serine 81 carries the phosphoserine modification. Residues 115-137 form a disordered region; the sequence is RENPQLDISPPCLGGSKKTRGTS.

The protein belongs to the BolA/IbaG family. As to quaternary structure, interacts with GLRX5.

The protein resides in the mitochondrion. Functionally, acts as a mitochondrial iron-sulfur (Fe-S) cluster assembly factor that facilitates (Fe-S) cluster insertion into a subset of mitochondrial proteins. Probably acts together with the monothiol glutaredoxin GLRX5. May protect cells against oxidative stress. This Mus musculus (Mouse) protein is BolA-like protein 1 (Bola1).